An 861-amino-acid polypeptide reads, in one-letter code: Leucine--tRNA ligase (861 aa).

The 'HIGH' region motif lies at 42 to 52; sequence PYPSGRIHMGH. Residues 623 to 627 carry the 'KMSKS' region motif; that stretch reads KMSKS. Residue Lys-626 participates in ATP binding.

It belongs to the class-I aminoacyl-tRNA synthetase family.

The protein resides in the cytoplasm. The enzyme catalyses tRNA(Leu) + L-leucine + ATP = L-leucyl-tRNA(Leu) + AMP + diphosphate. The sequence is that of Leucine--tRNA ligase from Caulobacter vibrioides (strain ATCC 19089 / CIP 103742 / CB 15) (Caulobacter crescentus).